Consider the following 94-residue polypeptide: Integration host factor subunit beta (94 aa).

This sequence belongs to the bacterial histone-like protein family. Heterodimer of an alpha and a beta chain.

In terms of biological role, this protein is one of the two subunits of integration host factor, a specific DNA-binding protein that functions in genetic recombination as well as in transcriptional and translational control. The protein is Integration host factor subunit beta of Serratia proteamaculans (strain 568).